We begin with the raw amino-acid sequence, 644 residues long: Far upstream element-binding protein 1 (644 aa).

Disordered stretches follow at residues 1-31 (MADY…NDAF) and 44-94 (KIGG…PMHQ). Position 2 is an N-acetylalanine (Ala2). Gly residues predominate over residues 14 to 27 (SAGGGGGGGGGGGV). Residues Ser52 and Ser55 each carry the phosphoserine modification. Residues 65-77 (RPLEDGDQPDAKK) show a composition bias toward basic and acidic residues. A compositionally biased stretch (polar residues) spans 81–94 (QNDSFGTQLPPMHQ). 3 consecutive KH domains span residues 100 to 164 (VMTE…KRLL), 185 to 251 (NAVQ…KEMV), and 275 to 339 (NEGI…AEII). Ser140 is subject to Phosphoserine. Phosphothreonine is present on Thr153. An omega-N-methylarginine mark is found at Arg321, Arg359, Arg361, and Arg363. The segment at 346–365 (VQAGNPGGPGPGGRGRGRGQ) is disordered. Residues 350–365 (NPGGPGPGGRGRGRGQ) show a composition bias toward gly residues. A KH 4 domain is found at 376-443 (LQEFNFIVPT…QQIDYARQLI (68 aa)). Residue Thr432 is modified to Phosphothreonine. 2 disordered regions span residues 447-532 (IGGP…GTDP) and 548-580 (QAQP…AGQV). Residues 468–505 (PHGPPGPPGPGTPMGPYNPAPYNPGPPGPAPHGPPAPY) show a composition bias toward pro residues. Over residues 556 to 573 (PAGAPTTTQTNGQGDQQN) the composition is skewed to low complexity. The residue at position 630 (Ser630) is a Phosphoserine.

Found in a complex with PUF60 and far upstream element (FUSE) DNA segment. Interacts with PUF60 and JTV1. Post-translationally, ubiquitinated. This targets the protein for proteasome-mediated degradation.

The protein localises to the nucleus. In terms of biological role, regulates MYC expression by binding to a single-stranded far-upstream element (FUSE) upstream of the MYC promoter. May act both as activator and repressor of transcription. This chain is Far upstream element-binding protein 1 (FUBP1), found in Homo sapiens (Human).